The following is a 399-amino-acid chain: Delta(12) acyl-lipid conjugase (11E,13E-forming) (399 aa).

Residues 11-30 (RNGGGPKKKMGPGQGLGPGE) form a disordered region. 2 helical membrane-spanning segments follow: residues 61–81 (FSYL…ADTY) and 93–113 (LAWP…WGIA). The short motif at 114–118 (HDCGH) is the Histidine box-1 element. A helical transmembrane segment spans residues 126 to 146 (LVDDVVGFLIHSLVFVPYFSF). Residues 150-154 (HRRHH) carry the Histidine box-2 motif. A run of 3 helical transmembrane segments spans residues 188 to 208 (VFII…FNIS), 232 to 252 (VLVH…YRIA), and 258 to 278 (GWLI…VVLI). The short motif at 325–329 (HVVHH) is the Histidine box-3 element.

It belongs to the fatty acid desaturase type 1 family. In terms of tissue distribution, expressed in developing seeds, but not in leaves.

The protein localises to the membrane. It carries out the reaction a (9Z,12Z)-octadecadienoyl-containing glycerolipid + 2 Fe(II)-[cytochrome b5] + O2 + 2 H(+) = a (9Z,11E,13E)-octadecatrienoyl-containing glycerolipid + 2 Fe(III)-[cytochrome b5] + 2 H2O. The catalysed reaction is (9Z,12Z,15Z)-octadecatrienoyl-containing glycerolipid + 2 Fe(II)-[cytochrome b5] + O2 + 2 H(+) = a (9Z,11E,13E,15Z)-octadecatetraenoyl-containing glycerolipid + 2 Fe(III)-[cytochrome b5] + 2 H2O. The protein operates within lipid metabolism; polyunsaturated fatty acid biosynthesis. Converts linoleic acid to alpha-eleostearic acid (18:3(9Z,11E,13E)) and alpha-linolenic acid to alpha-parinaric acid (18:4(9Z,11E, 13E, 15Z)). Converts a single cis double bond at carbon 12 to two conjugated trans bonds at positions 11 and 13. The sequence is that of Delta(12) acyl-lipid conjugase (11E,13E-forming) from Momordica charantia (Bitter gourd).